The primary structure comprises 156 residues: Ribonuclease ageritin (156 aa).

The signal sequence occupies residues 1–21; it reads MSESSTFTTAVVPEGEGVAPM. Histidine 98 is a catalytic residue. Asparagine 100 and asparagine 139 each carry an N-linked (GlcNAc...) asparagine glycan.

This sequence belongs to the ribotoxin-like family. In terms of assembly, monomer. Mg(2+) is required as a cofactor.

It localises to the vacuole lumen. It catalyses the reaction a 28S rRNA containing guanosine-adenosine pair + H2O = an [RNA fragment]-3'-adenosine-3'-phosphate + a 5'-a hydroxy-guanosine-3'-[RNA fragment].. With respect to regulation, in contrast to most ribotoxins, activity is completely inhibited by EDTA. Functionally, fungal ribonuclease involved in fungal defense. Highly specific and highly toxic fungal endonuclease that cleaves a single phosphodiester bond in the 28S RNA of eukaryotic ribosomes at a universally conserved GAGA tetraloop of the sarcin-ricin loop (SRL). The damage of the SRL inhibits the binding of translation elongation factors and halts protein biosynthesis, ultimately resulting in the death of the target cells. Shows antitumor activity. Exerts cytotoxicity and induces apoptosis towards rat glial cells and human glioma cells, and also displays some activity towards human neurolastoma cell lines. Shows a strong entomotoxicity against Aedes aegypti larvae, yet no nematotoxicity against nematodes. The protein is Ribonuclease ageritin of Cyclocybe aegerita (Black poplar mushroom).